The sequence spans 135 residues: Large ribosomal subunit protein bL19 (135 aa).

Belongs to the bacterial ribosomal protein bL19 family.

In terms of biological role, this protein is located at the 30S-50S ribosomal subunit interface and may play a role in the structure and function of the aminoacyl-tRNA binding site. The sequence is that of Large ribosomal subunit protein bL19 from Protochlamydia amoebophila (strain UWE25).